The primary structure comprises 339 residues: Glyceraldehyde-3-phosphate dehydrogenase (339 aa).

NAD(+)-binding positions include 13 to 14 (RI), aspartate 35, and lysine 84. D-glyceraldehyde 3-phosphate-binding positions include 156–158 (SCT), threonine 187, 216–217 (TG), and arginine 239. Residue cysteine 157 is the Nucleophile of the active site. NAD(+) is bound at residue asparagine 321.

Belongs to the glyceraldehyde-3-phosphate dehydrogenase family. In terms of assembly, homotetramer.

It localises to the cytoplasm. The catalysed reaction is D-glyceraldehyde 3-phosphate + phosphate + NAD(+) = (2R)-3-phospho-glyceroyl phosphate + NADH + H(+). It participates in carbohydrate degradation; glycolysis; pyruvate from D-glyceraldehyde 3-phosphate: step 1/5. The protein is Glyceraldehyde-3-phosphate dehydrogenase of Onchocerca volvulus.